We begin with the raw amino-acid sequence, 344 residues long: MSQIIDALVIGGGPAGLGAALGLCRQNHSVVLLDSVSYRNTIDTIPDNRMHMVATWDHRRPDEFRVAARKELQRYERFKYREVEVVSVRQTTSTQSGKLEALFNAKAADGTEYAARKLILATGVKDVFPKIEGFSECWAKGMYVLSPNSNELCIARETKYRSFHCLFCHGYEDRNSESVGVLAVGECAETSTVARMARAAHQFSRSITIYTNGNSELGDQVYRLLGKEGWCSINNLGIKKVYMPQKTPASPITVQVELSDGTTKTEDFLVHKPATVQASALYTQLGLQLTAEGDIKVKEPMFETSKAGVFAVGDCASPNKFVSSASTSGGFAAAGAAMQLQAGF.

FAD is bound by residues 12–15 (GGPA), 34–39 (DSVSYR), H51, and A121. C165 and C168 are oxidised to a cystine. Residues D314 and 321–322 (FV) each bind FAD.

It belongs to the class-II pyridine nucleotide-disulfide oxidoreductase family. As to quaternary structure, homodimer. It depends on FAD as a cofactor.

It functions in the pathway mycotoxin biosynthesis. Thioredoxin reductase; part of the gene cluster that mediates the biosynthesis of gramillins A and B, bicyclic lipopeptides that induce cell death in maize leaves but not in wheat leaves. The nonribosomal peptide synthetase GRA1 incorporates respectively a glutamic adic (Glu), a leucine (Leu), a serine (Ser), a hydroxyglutamine (HOGln), a 2-amino decanoic acid, and 2 cysteins (CysB and CysA). The biosynthesis of 2-amino decanoic acid incorporated in gramillins could be initiated by a fatty acid synthase composed of the alpha and beta subunits FGSG_00036 and FGSG_11656. The cytochrome P450 monooxygenase FGSG_15680 could hydroxylate the fatty acid chain. Subsequent oxidation to the ketone by the oxidoreductase FGSG_00048 and transamination by aminotransferase FGSG_00049 could form 2-amino-decanoic acid. On the other hand, FGSG_15680 could also be responsible for the HO-modified glutamine at the gamma-position. Whether hydroxylation occurs on the fully assembled product or on the Gln residue prior to assembly into the gramillins requires further proof. The thioredoxin FGSG_00043 could also be required for the disulfide-bond formation between CysA and CysB. The specific involvement of the remaining proteins from the cluster is more difficult to discern, but could have broader regulatory (FGSG_00040 and FGSG_11657) or enzymatic functions (FGSG_00044 and FGSG_00045). The final C-domain of GRA1 does not possess the expected sequence of a termination CT domain, often implicated in macrocyclization and release of a cyclopeptidein fungal NRPs; and the thioesterase FGSG_00047 may act in concert with the terminal C-domain of GRA1 to catalyze the formation of the macrocyclic anhydride and release of the products. This is Thioredoxin reductase FGSG_00043 from Gibberella zeae (strain ATCC MYA-4620 / CBS 123657 / FGSC 9075 / NRRL 31084 / PH-1) (Wheat head blight fungus).